Here is a 1495-residue protein sequence, read N- to C-terminus: ABC transporter C family member 12 (1495 aa).

11 helical membrane passes run 38-58 (VMLV…WIIF), 76-96 (VLGL…VMGI), 110-130 (FEVA…VLIG), 146-166 (FGVL…LPLK), 173-195 (ALYL…LIYI), 303-323 (FWLA…GPVI), 337-357 (AWVG…GVLC), 420-440 (GLWS…QQLG), 441-461 (VASL…TLII), 528-548 (FILN…FVLL), and 558-578 (FTSL…PNLL). The region spanning 303–583 (FWLAGIFKIG…LPNLLSQVVN (281 aa)) is the ABC transmembrane type-1 1 domain. An ABC transporter 1 domain is found at 615-839 (ISIKNGYFSW…GILFKKLMEN (225 aa)). 650-657 (GGTGEGKT) provides a ligand contact to ATP. 5 helical membrane passes run 907–927 (AVGG…TEVL), 949–969 (PGFY…VTFT), 1042–1062 (FALI…LLIL), 1140–1160 (LETL…LQNG), and 1166–1186 (AGFA…TSLL). One can recognise an ABC transmembrane type-1 2 domain in the interval 914-1198 (VMILLACYLA…VLRQASRAEN (285 aa)). One can recognise an ABC transporter 2 domain in the interval 1235 to 1469 (IKFEDVHLRY…DTSAFFRMVH (235 aa)). 1269–1276 (GRTGAGKS) contacts ATP.

This sequence belongs to the ABC transporter superfamily. ABCC family. Conjugate transporter (TC 3.A.1.208) subfamily. Ubiquitous.

It localises to the membrane. The enzyme catalyses ATP + H2O + xenobioticSide 1 = ADP + phosphate + xenobioticSide 2.. Its function is as follows. Pump for glutathione S-conjugates. The sequence is that of ABC transporter C family member 12 (ABCC12) from Arabidopsis thaliana (Mouse-ear cress).